The sequence spans 257 residues: UPF0246 protein BF4021 (257 aa).

The protein belongs to the UPF0246 family.

The chain is UPF0246 protein BF4021 from Bacteroides fragilis (strain YCH46).